The sequence spans 51 residues: Large ribosomal subunit protein eL39 (51 aa).

Belongs to the eukaryotic ribosomal protein eL39 family.

The polypeptide is Large ribosomal subunit protein eL39 (Thermococcus sibiricus (strain DSM 12597 / MM 739)).